Consider the following 764-residue polypeptide: 5-methyltetrahydropteroyltriglutamate--homocysteine methyltransferase (764 aa).

5-methyltetrahydropteroyltri-L-glutamate contacts are provided by residues arginine 16 to lysine 19 and lysine 115. L-homocysteine-binding positions include isoleucine 435–serine 437 and glutamate 488. Residues isoleucine 435–serine 437 and glutamate 488 each bind L-methionine. Residues arginine 519–cysteine 520 and tryptophan 565 contribute to the 5-methyltetrahydropteroyltri-L-glutamate site. Position 603 (aspartate 603) interacts with L-homocysteine. Residue aspartate 603 participates in L-methionine binding. Glutamate 609 contributes to the 5-methyltetrahydropteroyltri-L-glutamate binding site. Residues histidine 645, cysteine 647, and glutamate 669 each contribute to the Zn(2+) site. The active-site Proton donor is the histidine 698. Zn(2+) is bound at residue cysteine 730.

It belongs to the vitamin-B12 independent methionine synthase family. It depends on Zn(2+) as a cofactor.

It carries out the reaction 5-methyltetrahydropteroyltri-L-glutamate + L-homocysteine = tetrahydropteroyltri-L-glutamate + L-methionine. It functions in the pathway amino-acid biosynthesis; L-methionine biosynthesis via de novo pathway; L-methionine from L-homocysteine (MetE route): step 1/1. Its function is as follows. Catalyzes the transfer of a methyl group from 5-methyltetrahydrofolate to homocysteine resulting in methionine formation. This Burkholderia mallei (strain NCTC 10247) protein is 5-methyltetrahydropteroyltriglutamate--homocysteine methyltransferase.